We begin with the raw amino-acid sequence, 181 residues long: Translationally-controlled tumor protein homolog (181 aa).

The 181-residue stretch at 1–181 (MLIYKDIFTD…VKEAILEEKC (181 aa)) folds into the TCTP domain.

The protein belongs to the TCTP family.

It localises to the cytoplasm. In terms of biological role, involved in calcium binding and microtubule stabilization. The chain is Translationally-controlled tumor protein homolog (tct-1) from Caenorhabditis briggsae.